The primary structure comprises 105 residues: Probable tetrachloroethene reductive dehalogenase membrane anchor protein (105 aa).

3 helical membrane passes run 3 to 23 (IYDV…QYGI), 35 to 55 (IPLQ…LAWG), and 66 to 86 (AIGM…IITY).

The protein belongs to the PceB family.

Its subcellular location is the cell membrane. Its function is as follows. May act as a membrane anchor for the tetrachloroethene reductive dehalogenase PceA. In Dehalobacter restrictus (strain DSM 9455 / PER-K23), this protein is Probable tetrachloroethene reductive dehalogenase membrane anchor protein.